The chain runs to 97 residues: MAASQQEIIAGLAEIIEEVTGIEPSEVTPEKSFVDDLDIDSLSMVEIAVQTEDKYGVKIPDEDLAGLRTVGDVVAYIQKLEEENPEAAAALREKFAE.

In terms of domain architecture, Carrier spans 3–81 (ASQQEIIAGL…DVVAYIQKLE (79 aa)). At S41 the chain carries O-(pantetheine 4'-phosphoryl)serine.

Belongs to the acyl carrier protein (ACP) family. In terms of processing, 4'-phosphopantetheine is transferred from CoA to a specific serine of apo-AcpM.

Its subcellular location is the cytoplasm. Functionally, acyl carrier protein involved in meromycolate extension. The protein is Meromycolate extension acyl carrier protein (acpM) of Mycolicibacterium aurum (Mycobacterium aurum).